The chain runs to 631 residues: MSKSYLKNFDVIVIGGGHAGTEAAAASARVGCKTLLLTQKITDIGVLSCNPAIGGIGKSHLVKEIDALGGLMARAIDYSGIQFRVLNSKKGPAVRSTRAQADRILYCQNIKKLLKKELNLLILETEVKDLIVKNYQVIGVLTQSNMSFYSRSVVLSTGTFLGGKIHIGLESYSAGRKGEKASIDLALRLRDLPFRVDRLKTGTPPRIDINTINFENLFVQHGDVPTPVFSFMGDISNHPLQIPCFLTHTNEKTHEIIRKNLHKSPLYTGIIKGVGPRYCPSIEDKIVRFPDRKSHQIFLEPEGLTSIEIYPNGISTSLPLDVQKEIVSSVKGLEKSKIITPGYAVEYDFFDPKDLNLTLESKWIKGLFLAGQINGTTGYEEAASQGLLAGLNAALSAKDCKQWFPRRDQAYLGVLIDDLTTQGANEPYRMFTSRSEYRLTLREDNADLRLTEIAYKLGLVDNPRWIRYNEKVLNISNEKNRLKKIKIYPKSSDSTILNQLFNIVLTKEINILNLLKRPEITYENLKYLKNFKVGISDLEAAGQIENEIKYEGYIKRQLEEINRHLKNENTPLLPTYDYNKIKGLSHEAVLKLNDYKPVSVGQASRISGITPATISILLIHLKKEYYKNHLS.

FAD-binding positions include 15–20 (GGGHAG), Val127, and Ser182. Residue 275–289 (GPRYCPSIEDKIVRF) participates in NAD(+) binding. FAD is bound at residue Gln372.

It belongs to the MnmG family. Homodimer. Heterotetramer of two MnmE and two MnmG subunits. FAD serves as cofactor.

The protein localises to the cytoplasm. In terms of biological role, NAD-binding protein involved in the addition of a carboxymethylaminomethyl (cmnm) group at the wobble position (U34) of certain tRNAs, forming tRNA-cmnm(5)s(2)U34. In Buchnera aphidicola subsp. Schizaphis graminum (strain Sg), this protein is tRNA uridine 5-carboxymethylaminomethyl modification enzyme MnmG.